The chain runs to 109 residues: uncharacterized protein (109 aa).

The N-terminal stretch at 1-21 is a signal peptide; sequence MEKSICTSVLVLGLFISSAIG.

Prismatic layer of shell (at protein level). Expressed primarily in the mantle with highest level in the mantle edge and lower level in the mantle pallium.

The protein resides in the secreted. This is an uncharacterized protein from Margaritifera margaritifera (Freshwater pearl mussel).